The primary structure comprises 263 residues: tRNA uridine(34) hydroxylase (263 aa).

A Rhodanese domain is found at 129–223 (EGREIALLDT…YFEEVGGAHY (95 aa)). C183 functions as the Cysteine persulfide intermediate in the catalytic mechanism.

Belongs to the TrhO family.

It carries out the reaction uridine(34) in tRNA + AH2 + O2 = 5-hydroxyuridine(34) in tRNA + A + H2O. Its function is as follows. Catalyzes oxygen-dependent 5-hydroxyuridine (ho5U) modification at position 34 in tRNAs. The chain is tRNA uridine(34) hydroxylase from Variovorax paradoxus (strain S110).